Here is a 426-residue protein sequence, read N- to C-terminus: Serine--tRNA ligase (426 aa).

233–235 lines the L-serine pocket; sequence TSE. Residue 264 to 266 coordinates ATP; sequence RSE. Glu-287 serves as a coordination point for L-serine. 351-354 provides a ligand contact to ATP; that stretch reads EISS. Ser-387 is an L-serine binding site.

It belongs to the class-II aminoacyl-tRNA synthetase family. Type-1 seryl-tRNA synthetase subfamily. In terms of assembly, homodimer. The tRNA molecule binds across the dimer.

The protein resides in the cytoplasm. The enzyme catalyses tRNA(Ser) + L-serine + ATP = L-seryl-tRNA(Ser) + AMP + diphosphate + H(+). It carries out the reaction tRNA(Sec) + L-serine + ATP = L-seryl-tRNA(Sec) + AMP + diphosphate + H(+). It functions in the pathway aminoacyl-tRNA biosynthesis; selenocysteinyl-tRNA(Sec) biosynthesis; L-seryl-tRNA(Sec) from L-serine and tRNA(Sec): step 1/1. In terms of biological role, catalyzes the attachment of serine to tRNA(Ser). Is also able to aminoacylate tRNA(Sec) with serine, to form the misacylated tRNA L-seryl-tRNA(Sec), which will be further converted into selenocysteinyl-tRNA(Sec). The polypeptide is Serine--tRNA ligase (Xylella fastidiosa (strain M12)).